The sequence spans 380 residues: Cytochrome b (380 aa).

4 helical membrane passes run 34–54 (FGSLLGICLLTQILTGLLLAT), 78–99 (WLIRNLHANGASFFFICIYLHI), 114–134 (WNTGVILLLALMATAFVGYVL), and 179–199 (FFALHFLLPFMIAGLALIHLT). Heme b contacts are provided by H84 and H98. Heme b-binding residues include H183 and H197. H202 contributes to the a ubiquinone binding site. Helical transmembrane passes span 227 to 247 (LKDILGFIIMFLPLTTLALFS), 289 to 309 (LGGVLALAASVLVLFLAPLLH), 321 to 341 (FSQFLFWTLAANLFILTWVGS), and 348 to 368 (FIIIGQLASLTYFTILLLLFP).

This sequence belongs to the cytochrome b family. The cytochrome bc1 complex contains 11 subunits: 3 respiratory subunits (MT-CYB, CYC1 and UQCRFS1), 2 core proteins (UQCRC1 and UQCRC2) and 6 low-molecular weight proteins (UQCRH/QCR6, UQCRB/QCR7, UQCRQ/QCR8, UQCR10/QCR9, UQCR11/QCR10 and a cleavage product of UQCRFS1). This cytochrome bc1 complex then forms a dimer. Heme b is required as a cofactor.

Its subcellular location is the mitochondrion inner membrane. Functionally, component of the ubiquinol-cytochrome c reductase complex (complex III or cytochrome b-c1 complex) that is part of the mitochondrial respiratory chain. The b-c1 complex mediates electron transfer from ubiquinol to cytochrome c. Contributes to the generation of a proton gradient across the mitochondrial membrane that is then used for ATP synthesis. This Alca torda (Razorbill) protein is Cytochrome b (MT-CYB).